A 420-amino-acid polypeptide reads, in one-letter code: Glucose-1-phosphate adenylyltransferase (420 aa).

Residues Y107, G173, 188 to 189 (EK), and S206 each bind alpha-D-glucose 1-phosphate.

The protein belongs to the bacterial/plant glucose-1-phosphate adenylyltransferase family. As to quaternary structure, homotetramer.

It carries out the reaction alpha-D-glucose 1-phosphate + ATP + H(+) = ADP-alpha-D-glucose + diphosphate. Its pathway is glycan biosynthesis; glycogen biosynthesis. Functionally, involved in the biosynthesis of ADP-glucose, a building block required for the elongation reactions to produce glycogen. Catalyzes the reaction between ATP and alpha-D-glucose 1-phosphate (G1P) to produce pyrophosphate and ADP-Glc. The sequence is that of Glucose-1-phosphate adenylyltransferase from Shewanella sp. (strain W3-18-1).